The following is a 306-amino-acid chain: Methyl-CpG-binding domain-containing protein 7 (306 aa).

Over residues 1–11 the composition is skewed to polar residues; it reads MQTRSSSSPSA. The interval 1-21 is disordered; it reads MQTRSSSSPSANHRRETQLQI. MBD domains are found at residues 21-92, 106-171, and 172-242; these read IADP…QDKT, GVEY…RVLQ, and NRRG…ERLP. Arg-118, Arg-145, and Arg-174 each carry asymmetric dimethylarginine. The tract at residues 163–306 is required for interaction with PRMT11; it reads IEQQLRVLQN…AFVSLIEDRS (144 aa).

Interacts with PRMT11. Interacts (via C-terminus) with IDM2, but not with IDM1. Interacts with IDM3. Part of a complex made of MBD7, IDM1, IDM2 and IDM3. Methylated by PRMT11. Expressed in leaves, buds, flowers, stems, siliques, mature seeds and roots.

It localises to the nucleus. It is found in the chromosome. Its function is as follows. Transcriptional regulator that binds CpG islands in promoters where the DNA is methylated at position 5 of cytosine within CpG dinucleotides. May directly affect chromatin structure by inducing intra- and inter- chromatin compaction via bridging over multiple methylated CpG sites. Acts as an anti-silencing factor that prevents DNA hypermethylation and gene repression. Requires high mCG density for binding. Recognizes preferentially mCGs located in transposable elements. Required for active DNA demethylation. Prefers to target genomic loci around chromocenters. The protein is Methyl-CpG-binding domain-containing protein 7 of Arabidopsis thaliana (Mouse-ear cress).